The following is a 137-amino-acid chain: Large ribosomal subunit protein uL16 (137 aa).

Belongs to the universal ribosomal protein uL16 family. Part of the 50S ribosomal subunit.

Binds 23S rRNA and is also seen to make contacts with the A and possibly P site tRNAs. This chain is Large ribosomal subunit protein uL16, found in Agrobacterium fabrum (strain C58 / ATCC 33970) (Agrobacterium tumefaciens (strain C58)).